Here is a 235-residue protein sequence, read N- to C-terminus: MNKYMDLKDLQNKIEIKFENIKLLHIALTHSSYANEKKRIQYNERLEFLGDSVLQLVITEYLFMNYKDKSEGELSKKRALIVCENSLFSIAKNLELGEYIKMSKGEELTGGRERISILADAVEALIASIYLDKGIDVVREFILKNFYNIVEKAMKDEIILDYKTKLQEIIQKDGDIQINYILIKHEGPPHRRKFYTEVKIKDNVLGYGIGYSKKESEQNAAKKAIENMEVNKEYE.

The RNase III domain maps to 7-134; that stretch reads LKDLQNKIEI…LIASIYLDKG (128 aa). A Mg(2+)-binding site is contributed by Glu-47. Asp-51 is an active-site residue. Residues Asp-120 and Glu-123 each contribute to the Mg(2+) site. Glu-123 is an active-site residue. Positions 161-230 constitute a DRBM domain; sequence DYKTKLQEII…AKKAIENMEV (70 aa).

The protein belongs to the ribonuclease III family. In terms of assembly, homodimer. The cofactor is Mg(2+).

Its subcellular location is the cytoplasm. It catalyses the reaction Endonucleolytic cleavage to 5'-phosphomonoester.. Functionally, digests double-stranded RNA. Involved in the processing of primary rRNA transcript to yield the immediate precursors to the large and small rRNAs (23S and 16S). Processes some mRNAs, and tRNAs when they are encoded in the rRNA operon. Processes pre-crRNA and tracrRNA of type II CRISPR loci if present in the organism. This is Ribonuclease 3 from Clostridium tetani (strain Massachusetts / E88).